We begin with the raw amino-acid sequence, 901 residues long: Clathrin coat assembly protein AP180 (901 aa).

The region spanning 14-145 (QYSVTGSAVA…FSYRQMAFDF (132 aa)) is the ENTH domain. Disordered stretches follow at residues 285–326 (LEGK…DTSP), 397–424 (PISD…STTT), 497–522 (PETS…PSPA), and 573–606 (AAAP…PESS). Phosphoserine is present on residues Ser-296, Ser-300, and Ser-306. The span at 302–324 (LSKSSPATTVTSPNSTPAKTIDT) shows a compositional bias: polar residues. A glycan (O-linked (GlcNAc) threonine) is linked at Thr-310. Ser-313 is subject to Phosphoserine. Thr-317 carries the phosphothreonine modification. Composition is skewed to low complexity over residues 410 to 424 (TTTT…STTT) and 500 to 511 (SAPVVTPTASTA). Over residues 512 to 522 (PPVPATAPSPA) the composition is skewed to pro residues. 5 positions are modified to phosphoserine: Ser-594, Ser-600, Ser-621, Ser-627, and Ser-761. 2 disordered regions span residues 803–845 (SAGV…GMTM) and 857–901 (MMRP…KDFL). Low complexity predominate over residues 835–845 (GMPPSGTGMTM). Arg-859 carries the post-translational modification Asymmetric dimethylarginine; alternate. Arg-859 carries the post-translational modification Omega-N-methylarginine; alternate. A compositionally biased stretch (polar residues) spans 870 to 882 (TQLSPSPTPATQS). Positions 887 to 901 (PAKDPLADLNIKDFL) are enriched in basic and acidic residues.

Belongs to the PICALM/SNAP91 family. Binds AP2A2. Interacts with AP2B1; clathrin competes with SNAP91. Thr-310 can be modified by the addition of N-acetylglucosamine which can be further phosphorylated. There is no evidence for direct Thr-310 phosphorylation. As to expression, brain. Associated with the synapses.

Its subcellular location is the cell membrane. It localises to the membrane. The protein resides in the coated pit. In terms of biological role, adaptins are components of the adaptor complexes which link clathrin to receptors in coated vesicles. Clathrin-associated protein complexes are believed to interact with the cytoplasmic tails of membrane proteins, leading to their selection and concentration. Binding of AP180 to clathrin triskelia induces their assembly into 60-70 nm coats. The chain is Clathrin coat assembly protein AP180 (Snap91) from Mus musculus (Mouse).